A 163-amino-acid chain; its full sequence is Nucleotide-binding protein MT0592 (163 aa).

This sequence belongs to the YajQ family.

Nucleotide-binding protein. This Mycobacterium tuberculosis (strain CDC 1551 / Oshkosh) protein is Nucleotide-binding protein MT0592.